Reading from the N-terminus, the 375-residue chain is Succinyl-diaminopimelate desuccinylase (375 aa).

Residue His66 coordinates Zn(2+). Residue Asp68 is part of the active site. Asp99 serves as a coordination point for Zn(2+). The active-site Proton acceptor is Glu133. Residues Glu134, Glu162, and His348 each contribute to the Zn(2+) site.

It belongs to the peptidase M20A family. DapE subfamily. In terms of assembly, homodimer. It depends on Zn(2+) as a cofactor. The cofactor is Co(2+).

It catalyses the reaction N-succinyl-(2S,6S)-2,6-diaminopimelate + H2O = (2S,6S)-2,6-diaminopimelate + succinate. It functions in the pathway amino-acid biosynthesis; L-lysine biosynthesis via DAP pathway; LL-2,6-diaminopimelate from (S)-tetrahydrodipicolinate (succinylase route): step 3/3. Its function is as follows. Catalyzes the hydrolysis of N-succinyl-L,L-diaminopimelic acid (SDAP), forming succinate and LL-2,6-diaminopimelate (DAP), an intermediate involved in the bacterial biosynthesis of lysine and meso-diaminopimelic acid, an essential component of bacterial cell walls. This chain is Succinyl-diaminopimelate desuccinylase, found in Serratia proteamaculans (strain 568).